The chain runs to 177 residues: MFNIKMTISVLLIALIVLLIIILVVFLYYKKQQPPKKVCKVDKDCGSGEHCVRGSCSSLSCLDAVKTDKRNIKIDSNISSCEFTPNFYRFMDTAADEQQEFGKTRHSIKITPSPSESHSPQEVCERYCSWGTDDCTGWEYDGNEKEGTCYIYNNPHHPVLKYGKNHVIALPRNHKHA.

The Intravirion segment spans residues 1-7 (MFNIKMT). The helical transmembrane segment at 8–28 (ISVLLIALIVLLIIILVVFLY) threads the bilayer. Over 29 to 177 (YKKQQPPKKV…IALPRNHKHA (149 aa)) the chain is Virion surface.

Belongs to the asfivirus inner membrane protein p22 family.

It localises to the virion membrane. The protein localises to the host cell membrane. This chain is Inner membrane protein p22, found in African swine fever virus (isolate Warthog/Namibia/Wart80/1980) (ASFV).